A 551-amino-acid polypeptide reads, in one-letter code: MHHLHPMIVCIFVMYTGIVGSDAIAGDQLLNIGVIQSKIRSLMYYTDGGASFIVVKLLPNLPPSNGTCNITSLDAYNVTLFKLLTPLIENLSKISTVTDTKTRQKRFAGVVVGLAALGVATAAQITAAVAIVKANANAAAINNLASSIQSTNKAVSDVIDASRTIATAVQAIQDHINGAIVNGITSASCRAHDALIGSILNLYLTELTTIFHNQITNPALTPLSIQALRILLGSTLPIVIESKLNTNLNTAELLSSGLLTGQIISISPMYMQMLIQINVPTFIMQPGAKVIDLIAISANHKLQEVVVQVPNRILEYANELQNYPANDCVVTPNSVCCRYNEGSPIPESQYQCLRGNLNSCTFTPIIGNFLKRFAFANGVLYANCKSLLCRCADPPHVVSQDDTQGISIIDIKRCSEMMLDTFSFRITSTFNATYVTDFSMINANIVHLSPLDLSNQINSINKSLKSAEDWIADSNFFANQARTAKTLYSLSAIALILSVITLVVVGLLIAYIIKLVSQIHQFRSLAATTMFHRENPAFFSKNNHGNIYGIS.

The N-terminal stretch at 1-23 is a signal peptide; sequence MHHLHPMIVCIFVMYTGIVGSDA. Residues 24 to 492 are Extracellular-facing; it reads IAGDQLLNIG…TAKTLYSLSA (469 aa). N65, N69, N77, and N90 each carry an N-linked (GlcNAc...) asparagine; by host glycan. 5 disulfides stabilise this stretch: C68/C189, C328/C337, C352/C360, C384/C389, and C391/C414. The interval 107–131 is fusion peptide; that stretch reads FAGVVVGLAALGVATAAQITAAVAI. Positions 132–160 form a coiled coil; sequence VKANANAAAINNLASSIQSTNKAVSDVID. 2 N-linked (GlcNAc...) asparagine; by host glycosylation sites follow: N431 and N461. A coiled-coil region spans residues 456-481; the sequence is QINSINKSLKSAEDWIADSNFFANQA. Residues 493-513 traverse the membrane as a helical segment; that stretch reads IALILSVITLVVVGLLIAYII. Topologically, residues 514 to 551 are cytoplasmic; sequence KLVSQIHQFRSLAATTMFHRENPAFFSKNNHGNIYGIS.

It belongs to the paramyxoviruses fusion glycoprotein family. As to quaternary structure, homotrimer of disulfide-linked F1-F2. The inactive precursor F0 is glycosylated and proteolytically cleaved into F1 and F2 to be functionally active. The cleavage is mediated by cellular proteases during the transport and maturation of the polypeptide.

The protein localises to the virion membrane. The protein resides in the host cell membrane. In terms of biological role, class I viral fusion protein. Under the current model, the protein has at least 3 conformational states: pre-fusion native state, pre-hairpin intermediate state, and post-fusion hairpin state. During viral and plasma cell membrane fusion, the heptad repeat (HR) regions assume a trimer-of-hairpins structure, positioning the fusion peptide in close proximity to the C-terminal region of the ectodomain. The formation of this structure appears to drive apposition and subsequent fusion of viral and plasma cell membranes. Directs fusion of viral and cellular membranes leading to delivery of the nucleocapsid into the cytoplasm. This fusion is pH independent and occurs directly at the outer cell membrane. The trimer of F1-F2 (F protein) probably interacts with HN at the virion surface. Upon HN binding to its cellular receptor, the hydrophobic fusion peptide is unmasked and interacts with the cellular membrane, inducing the fusion between cell and virion membranes. Later in infection, F proteins expressed at the plasma membrane of infected cells could mediate fusion with adjacent cells to form syncytia, a cytopathic effect that could lead to tissue necrosis. The protein is Fusion glycoprotein F0 (F) of Human parainfluenza 2 virus (strain Greer) (HPIV-2).